The following is a 70-amino-acid chain: MPIVRLKENEPFEAALRRFKRTIEKTGLLTELRSREFYEKPTAERKRKHAAAVKRHYKRIRSQQLPPRMY.

It belongs to the bacterial ribosomal protein bS21 family.

This is Small ribosomal subunit protein bS21 from Bordetella avium (strain 197N).